Reading from the N-terminus, the 919-residue chain is Chitin synthase 1 (919 aa).

2 disordered regions span residues Met1–Thr69 and Asn109–Pro134. Residues Gly11 to Asp30 are compositionally biased toward low complexity. N-linked (GlcNAc...) asparagine glycosylation is found at Asn187 and Asn556. The next 7 membrane-spanning stretches (helical) occupy residues Ile594–Ile614, Leu630–Leu650, Ile668–Leu688, Val713–Ala733, Phe742–Cys762, Leu843–Gly863, and Ile887–Thr919.

Belongs to the chitin synthase family. Class III subfamily.

The protein resides in the cell membrane. The protein localises to the cytoplasmic vesicle membrane. The catalysed reaction is [(1-&gt;4)-N-acetyl-beta-D-glucosaminyl](n) + UDP-N-acetyl-alpha-D-glucosamine = [(1-&gt;4)-N-acetyl-beta-D-glucosaminyl](n+1) + UDP + H(+). In terms of biological role, polymerizes chitin, a structural polymer of the cell wall and septum, by transferring the sugar moiety of UDP-GlcNAc to the non-reducing end of the growing chitin polymer. This is Chitin synthase 1 from Mycosarcoma maydis (Corn smut fungus).